We begin with the raw amino-acid sequence, 802 residues long: E3 ubiquitin-protein ligase UHRF2 (802 aa).

The Ubiquitin-like domain maps to 1-78; it reads MWIQVRTIDG…IQLLVRPDPD (78 aa). Disordered stretches follow at residues 80–116 and 153–197; these read LPGTSTQIEAKPCSNSPPKVKKAPRVGPSNQPSTSAR and RASD…STSN. Polar residues-rich tracts occupy residues 82 to 96, 153 to 177, and 188 to 197; these read GTSTQIEAKPCSNSP, RASDGQSRGKTPLKNGSSCKRTNGN, and KLDSVPSTSN. Residues 117-311 are required for interaction with histone H3; sequence ARLIDPGFGI…VDEIFKIERP (195 aa). Positions 194-288 are interaction with PCNP; that stretch reads STSNSDCVAA…KELRVKIFLG (95 aa). A PHD-type zinc finger spans residues 344–395; the sequence is SCSCRVCGGKHEPNMQLLCDECNVAYHIYCLNPPLDKVPEEEYWYCPSCKTD. Positions 414 to 644 are methyl-CpG binding and interaction with HDAC1; the sequence is KMPSASTESR…LQYPAGYPSD (231 aa). One can recognise a YDG domain in the interval 448-612; the sequence is GPIPGIPVGS…FLVWRYLLRR (165 aa). The segment at 640–674 is disordered; the sequence is GYPSDKEGKKPKGQSKKQPSGTTKRPISDDDCPSA. Position 667 is a phosphoserine (S667). The RING-type zinc-finger motif lies at 733–772; it reads CVCCQELVYQPVTTECFHNVCKDCLQRSFKAQVFSCPACR.

Homodimer; disulfide-linked. Binds methylated CpG containing oligonucleotides. Interacts with H3; the interaction has a preference for the 'Lys-9' trimethylated form of H3 (H3K9me3). Interacts with PCNP. Interacts with HDAC1. Interacts directly with CCNE1; the interaction ubiquitinates CCNE1 and appears independent of CCNE1 phosphorylation. Interacts with CCND1; the interaction ubiquitinates CCND1 and appears independent of CCND1 phosphorylation. Interacts with p53/TP53 and RB1. Interacts with UBE2I. Interacts with ZNF618. Interacts with UHRF1. Interacts with FANCD2. Interacts with ATR. Interacts with PCNA. Post-translationally, may be autoubiquitinated; which may lead to proteasomal degradation. In terms of processing, phosphorylated. Phosphorylation may be mediated by CDK2. Autosumoylated.

It localises to the nucleus. It is found in the chromosome. The enzyme catalyses S-ubiquitinyl-[E2 ubiquitin-conjugating enzyme]-L-cysteine + [acceptor protein]-L-lysine = [E2 ubiquitin-conjugating enzyme]-L-cysteine + N(6)-ubiquitinyl-[acceptor protein]-L-lysine.. It participates in protein modification; protein ubiquitination. E3 ligase activity is robustly activated by 5-hydroxymethylcytosine. In terms of biological role, E3 ubiquitin ligase that plays important roles in DNA methylation, histone modifications, cell cycle and DNA repair. Acts as a specific reader for 5-hydroxymethylcytosine (5hmC) and thereby recruits various substrates to these sites to ubiquitinate them. This activity also allows the maintenance of 5mC levels at specific genomic loci and regulates neuron-related gene expression. Participates in cell cycle regulation by ubiquitinating cyclins CCND1 and CCNE1 and thereby inducing G1 arrest. Also ubiquitinates PCNP leading to its degradation by the proteasome. Plays an active role in DNA damage repair by ubiquitinating p21/CDKN1A leading to its proteasomal degradation. Also promotes DNA repair by acting as an interstrand cross-links (ICLs) sensor. Mechanistically, cooperates with UHRF1 to ensure recruitment of FANCD2 to ICLs, leading to FANCD2 monoubiquitination and subsequent activation. Contributes to UV-induced DNA damage response by physically interacting with ATR in response to irradiation, thereby promoting ATR activation. The polypeptide is E3 ubiquitin-protein ligase UHRF2 (UHRF2) (Homo sapiens (Human)).